A 1094-amino-acid chain; its full sequence is Transport and Golgi organization protein 6 homolog (1094 aa).

Residues 468–488 (LTVLMDSLLPVLGVLFLLYCF) traverse the membrane as a helical segment. S556 carries the phosphoserine modification. Residues 777 to 795 (EEQQQTSHERPTDVAHSHL) are compositionally biased toward basic and acidic residues. A disordered region spans residues 777 to 834 (EEQQQTSHERPTDVAHSHLEQQQSHETAPQTGLQSNAPIIPQGVNEPSTTTSQKSGSV). 2 stretches are compositionally biased toward polar residues: residues 796–813 (EQQQ…QSNA) and 821–834 (NEPS…SGSV). HEAT repeat units lie at residues 873-909 (LEMQ…SDVY) and 952-988 (SKYR…CQRL).

The protein belongs to the Tango6 family.

The protein resides in the membrane. In Homo sapiens (Human), this protein is Transport and Golgi organization protein 6 homolog (TANGO6).